The primary structure comprises 572 residues: Phosphoenolpyruvate-protein phosphotransferase (572 aa).

The Tele-phosphohistidine intermediate role is filled by H191. 2 residues coordinate phosphoenolpyruvate: R298 and R334. Residues E433 and D457 each contribute to the Mg(2+) site. Residues 456-457 and R467 contribute to the phosphoenolpyruvate site; that span reads ND. The Proton donor role is filled by C504.

Belongs to the PEP-utilizing enzyme family. In terms of assembly, homodimer. Mg(2+) serves as cofactor.

It is found in the cytoplasm. It catalyses the reaction L-histidyl-[protein] + phosphoenolpyruvate = N(pros)-phospho-L-histidyl-[protein] + pyruvate. Functionally, general (non sugar-specific) component of the phosphoenolpyruvate-dependent sugar phosphotransferase system (sugar PTS). This major carbohydrate active-transport system catalyzes the phosphorylation of incoming sugar substrates concomitantly with their translocation across the cell membrane. Enzyme I transfers the phosphoryl group from phosphoenolpyruvate (PEP) to the phosphoryl carrier protein (HPr). This Staphylococcus aureus (strain COL) protein is Phosphoenolpyruvate-protein phosphotransferase (ptsI).